Here is a 79-residue protein sequence, read N- to C-terminus: uncharacterized protein (79 aa).

The protein belongs to the asfivirus D79L family.

This is an uncharacterized protein from African swine fever virus (isolate Tick/South Africa/Pretoriuskop Pr4/1996) (ASFV).